The chain runs to 247 residues: Phosphomannomutase (247 aa).

The Nucleophile role is filled by aspartate 13. Mg(2+) is bound by residues aspartate 13 and aspartate 15. Aspartate 15 acts as the Proton donor/acceptor in catalysis. Alpha-D-mannose 1-phosphate-binding residues include arginine 22, arginine 124, arginine 135, arginine 142, serine 180, and aspartate 182. 3 residues coordinate Mg(2+): aspartate 208, tyrosine 220, and threonine 225.

The protein belongs to the eukaryotic PMM family. In terms of assembly, homodimer. Mg(2+) is required as a cofactor.

It is found in the cytoplasm. It catalyses the reaction alpha-D-mannose 1-phosphate = D-mannose 6-phosphate. The protein operates within nucleotide-sugar biosynthesis; GDP-alpha-D-mannose biosynthesis; alpha-D-mannose 1-phosphate from D-fructose 6-phosphate: step 2/2. Its function is as follows. Catalyzes the interconversion of mannose-6-phosphate to mannose-1-phosphate, the precursor for the synthesis of GDP-mannose. GDP-mannose is an essential sugar nucleotide for the synthesis of D-mannose-containing cell wall polysaccharides (galactomannans and glucomannans), glycolipids, glycoproteins and the antioxidant L-ascorbate. Can complement the yeast temperature-sensitive mutant sec53-6. This chain is Phosphomannomutase, found in Glycine max (Soybean).